Here is an 818-residue protein sequence, read N- to C-terminus: H(+)/Cl(-) exchange transporter 3 (818 aa).

The Cytoplasmic segment spans residues 1-125; that stretch reads MESEQLFHRG…WEMTKSLYDA (125 aa). The Di-leucine internalization motif; mediates targeting to late endosome and lysosome membranes motif lies at 13–17; that stretch reads RNSYN. The IP motif; mediates targeting to recycling endosomes motif lies at 18 to 19; that stretch reads SI. Short sequence motifs (di-leucine internalization motif; mediates targeting to late endosome and lysosome membranes) lie at residues 28–29, 46–47, and 71–75; these read LL and LLDLL. The helical transmembrane segment at 126-163 threads the bilayer; the sequence is WSGWLVVTLTGLASGALAGLIDIAADWMTDLKEGICLS. N-linked (GlcNAc...) asparagine glycosylation is present at N177. The helical transmembrane segment at 209–232 threads the bilayer; the sequence is MNYIMYIFWALSFAFLAVSLVKVF. A Selectivity filter part_1 motif is present at residues 238-242; it reads GSGIP. Chloride is bound at residue S239. Residues 241–248 constitute an intramembrane region (helical); sequence IPEIKTIL. 2 helical membrane passes run 258-276 and 282-301; these read GKWTLMIKTITLVLAVASG and EGPLVHVACCCGNIFSYLFP. Positions 280-284 match the Selectivity filter part_2 motif; it reads GKEGP. Intramembrane regions (helical) lie at residues 313–325 and 329–337; these read VLSAASAAGVSVA and PIGGVLFSL. The next 3 membrane-spanning stretches (helical) occupy residues 349 to 367, 391 to 416, and 423 to 443; these read LWRSFFAALVAAFVLRSIN, FPFILLGVFGGLWGAFFIRANIAWCR, and FGKYPVLEVIIVAAITAVIAF. Residues N451 and N479 are each glycosylated (N-linked (GlcNAc...) asparagine). The next 2 membrane-spanning stretches (helical) occupy residues 500–520 and 525–544; these read IWQLCLALIFKIIMTVFTFGI and GLFIPSMAIGAIAGRIVGIA. A Selectivity filter part_3 motif is present at residues 525 to 529; that stretch reads GLFIP. Chloride is bound at residue F527. 2 intramembrane regions (helical) span residues 572-586 and 590-601; these read GLYAMVGAAACLGGV and TVSLVVIVFELT. Residues 602–605 constitute an intramembrane region (note=Loop between two helices); it reads GGLE. Residues 606-624 traverse the membrane as a helical segment; the sequence is YIVPLMAAVMTSKWVGDAF. The Cytoplasmic portion of the chain corresponds to 625-818; the sequence is GREGIYEAHI…NQDPASIMFN (194 aa). Chloride is bound at residue Y630. CBS domains follow at residues 658-722 and 755-812; these read MRPR…ARKK and LDMS…NQDP. Residues 689 to 691 and 796 to 799 each bind ATP; these read YNG and TKKD.

The protein belongs to the chloride channel (TC 2.A.49) family. ClC-3/CLCN3 subfamily. Monomer and homodimer. Forms heterodimers with CLCN4. In terms of processing, N-glycosylated. Detected in kidney, in the apical part of proximal tubule cells (at protein level). Expressed at high levels in the kidney while a low level expression is seen in the brain. Within the brain, it is prominent in the hippocampus, cerebral cortex and olfactory bulb. In terms of tissue distribution, brain, pancreas, kidney, liver, lung, retina, olfactory bulb, and spinal cord. As to expression, pancreas, kidney, liver, lung and retina. Brain, heart, pancreas, kidney, liver, lung, retina, olfactory bulb, and spinal cord. In terms of tissue distribution, expressed at high levels in the liver and at low levels in the brain.

The protein resides in the cytoplasmic vesicle. It is found in the secretory vesicle membrane. The protein localises to the lysosome membrane. It localises to the late endosome membrane. Its subcellular location is the cell membrane. The protein resides in the early endosome membrane. It is found in the recycling endosome membrane. Inhibited by Cd(2+). In terms of biological role, may influence large dense-core vesicle exocytosis in adrenal chromaffin cells. Strongly outwardly rectifying, electrogenic H(+)/Cl(-)exchanger which mediates the exchange of chloride ions against protons. The CLC channel family contains both chloride channels and proton-coupled anion transporters that exchange chloride or another anion for protons. The presence of conserved gating glutamate residues is typical for family members that function as antiporters. Functionally, strongly outwardly rectifying, electrogenic H(+)/Cl(-)exchanger which mediates the exchange of chloride ions against protons. Facilitates endosomal acidification and chloride accumulation in hepatocytes. Its function is as follows. Strongly outwardly rectifying, electrogenic H(+)/Cl(-)exchanger which mediates the exchange of chloride ions against protons. The chain is H(+)/Cl(-) exchange transporter 3 (Clcn3) from Mus musculus (Mouse).